A 415-amino-acid chain; its full sequence is Transposase for insertion sequence element IS1081 (415 aa).

This sequence belongs to the transposase mutator family.

Functionally, required for the transposition of the insertion element. The polypeptide is Transposase for insertion sequence element IS1081 (Mycobacterium bovis (strain ATCC BAA-935 / AF2122/97)).